Here is a 572-residue protein sequence, read N- to C-terminus: M-phase inducer phosphatase 3 (572 aa).

Disordered stretches follow at residues 95–117 (NLGD…GKLE) and 304–354 (SPSM…QRRG). The region spanning 420–527 (LVEKFFIIDC…FFPEYKELCE (108 aa)) is the Rhodanese domain. The active site involves Cys-476.

It belongs to the MPI phosphatase family.

It catalyses the reaction O-phospho-L-tyrosyl-[protein] + H2O = L-tyrosyl-[protein] + phosphate. In terms of biological role, this protein functions as a dosage-dependent inducer in mitotic control. It is a tyrosine protein phosphatase required for progression of the cell cycle. It may directly dephosphorylate p34(cdc2) and activate the p34(cdc2) kinase activity. The chain is M-phase inducer phosphatase 3 (cdc25-3) from Xenopus laevis (African clawed frog).